A 342-amino-acid chain; its full sequence is uncharacterized protein (342 aa).

The protein belongs to the cycloisomerase 2 family.

This is an uncharacterized protein from Staphylococcus aureus (strain MSSA476).